The sequence spans 310 residues: Sporozoite surface protein P36 (310 aa).

A signal peptide spans 1-24; sequence MRKALYSLLFYMCICLYIYTPVFM. 6-Cys domains lie at 25 to 157 and 168 to 309; these read ANLK…IKKT and YIKG…STKA. 6 disulfides stabilise this stretch: C38-C48, C62-C137, C80-C135, C172-C196, C210-C291, and C227-C289. 3 N-linked (GlcNAc...) asparagine glycosylation sites follow: N72, N114, and N118. The N-linked (GlcNAc...) asparagine glycan is linked to N290.

It localises to the cell surface. Its subcellular location is the cell membrane. Functionally, involved in sporozoite infection of hepatocytes and replication therein. In Plasmodium yoelii yoelii, this protein is Sporozoite surface protein P36 (P36).